Consider the following 234-residue polypeptide: Small ribosomal subunit protein uS3 (234 aa).

Residues Ile-39–Lys-107 form the KH type-2 domain.

This sequence belongs to the universal ribosomal protein uS3 family. In terms of assembly, part of the 30S ribosomal subunit. Forms a tight complex with proteins S10 and S14.

In terms of biological role, binds the lower part of the 30S subunit head. Binds mRNA in the 70S ribosome, positioning it for translation. The chain is Small ribosomal subunit protein uS3 from Helicobacter pylori (strain J99 / ATCC 700824) (Campylobacter pylori J99).